A 369-amino-acid polypeptide reads, in one-letter code: Anhydro-N-acetylmuramic acid kinase (369 aa).

Gly12–Asp19 contributes to the ATP binding site.

Belongs to the anhydro-N-acetylmuramic acid kinase family.

It catalyses the reaction 1,6-anhydro-N-acetyl-beta-muramate + ATP + H2O = N-acetyl-D-muramate 6-phosphate + ADP + H(+). The protein operates within amino-sugar metabolism; 1,6-anhydro-N-acetylmuramate degradation. It functions in the pathway cell wall biogenesis; peptidoglycan recycling. Its function is as follows. Catalyzes the specific phosphorylation of 1,6-anhydro-N-acetylmuramic acid (anhMurNAc) with the simultaneous cleavage of the 1,6-anhydro ring, generating MurNAc-6-P. Is required for the utilization of anhMurNAc either imported from the medium or derived from its own cell wall murein, and thus plays a role in cell wall recycling. The sequence is that of Anhydro-N-acetylmuramic acid kinase from Shigella boydii serotype 4 (strain Sb227).